The primary structure comprises 82 residues: Large ribosomal subunit protein uL23 (82 aa).

It belongs to the universal ribosomal protein uL23 family. Part of the 50S ribosomal subunit. Contacts protein L29.

Binds to 23S rRNA. One of the proteins that surrounds the polypeptide exit tunnel on the outside of the ribosome. The chain is Large ribosomal subunit protein uL23 from Methanosarcina barkeri (strain Fusaro / DSM 804).